Here is a 559-residue protein sequence, read N- to C-terminus: S-layer protein (559 aa).

A signal peptide spans 1–28; sequence MAMSLKKIGAIAVGGAMVASALASGVMA. N108, N130, N155, N222, and N373 each carry an N-linked (GlcNAc...) asparagine glycan.

The protein belongs to the Mj S-layer protein family.

Its subcellular location is the secreted. It is found in the cell wall. The protein resides in the S-layer. Functionally, S-layer protein. The S-layer is a paracrystalline mono-layered assembly of proteins which coat the surface of the cell. The protein is S-layer protein of Methanothermococcus thermolithotrophicus (Methanococcus thermolithotrophicus).